The sequence spans 235 residues: Nucleoside diphosphate kinase 4, chloroplastic (235 aa).

ATP is bound by residues Lys-93, Phe-141, Arg-169, Thr-175, Arg-186, and Asn-196. His-199 acts as the Pros-phosphohistidine intermediate in catalysis.

This sequence belongs to the NDK family. In terms of assembly, homohexamer. Mg(2+) serves as cofactor.

Its subcellular location is the plastid. It localises to the chloroplast thylakoid lumen. It carries out the reaction a 2'-deoxyribonucleoside 5'-diphosphate + ATP = a 2'-deoxyribonucleoside 5'-triphosphate + ADP. The catalysed reaction is a ribonucleoside 5'-diphosphate + ATP = a ribonucleoside 5'-triphosphate + ADP. In terms of biological role, major role in the synthesis of nucleoside triphosphates other than ATP. The ATP gamma phosphate is transferred to the NDP beta phosphate via a ping-pong mechanism, using a phosphorylated active-site intermediate. Shows the highest specificity towards GDP. The polypeptide is Nucleoside diphosphate kinase 4, chloroplastic (NDK4) (Spinacia oleracea (Spinach)).